A 229-amino-acid chain; its full sequence is C-type lectin domain family 1 member B (229 aa).

Residues 1–33 (MQDEDGYITLNIKTRKPALISVGSASSSWWRVM) lie on the Cytoplasmic side of the membrane. Tyr-7 carries the phosphotyrosine modification. Residues 7–10 (YITL) carry the ITAM motif. Residues 34–54 (ALILLILCVGMVVGLVALGIW) form a helical; Signal-anchor for type II membrane protein membrane-spanning segment. Topologically, residues 55-229 (SVMQRNYLQG…AGMTKVDQLP (175 aa)) are extracellular. Asn-68 is a glycosylation site (N-linked (GlcNAc...) asparagine). A disulfide bond links Cys-102 and Cys-113. The C-type lectin domain maps to 109-217 (YGDSCYGFFR…CENKHYLMCE (109 aa)). Asn-120 and Asn-134 each carry an N-linked (GlcNAc...) asparagine glycan. Disulfide bonds link Cys-130–Cys-216 and Cys-195–Cys-208.

In terms of assembly, homodimer. Interacts (via cytoplasmic domain) with RACK1; promotes CLEC1B ubiquitination and proteasome-mediated degradation. Interacts (dimer) with SYK (via SH2 domains). Interacts with PDPN; the interaction is independent of CLEC1B glycosylation and activates CLEC1B. Post-translationally, glycosylated. In terms of processing, phosphorylated on tyrosine residue in response to rhodocytin binding. Expressed preferentially in the liver. Also expressed in immune cells of myeloid origin and on the surface of platelets.

The protein localises to the membrane. Its function is as follows. C-type lectin-like receptor that functions as a platelet receptor for the lymphatic endothelial marker, PDPN. After ligand activation, signals via sequential activation of SRC and SYK tyrosine kinases leading to activation of PLCG2. In terms of biological role, (Microbial infection) Acts as a receptor for the platelet-aggregating snake venom protein rhodocytin. Rhodocytin binding leads to tyrosine phosphorylation and this promotes the binding of spleen tyrosine kinase (SYK) and initiation of downstream tyrosine phosphorylation events and activation of PLCG2. (Microbial infection) Acts as an attachment factor for Human immunodeficiency virus type 1 (HIV-1) and facilitates its capture by platelets. The chain is C-type lectin domain family 1 member B (CLEC1B) from Homo sapiens (Human).